Reading from the N-terminus, the 108-residue chain is Translation initiation factor 1A (108 aa).

In terms of domain architecture, S1-like spans 11–85 (SVKEVPKPAE…NKCDIIYKYS (75 aa)).

This sequence belongs to the eIF-1A family.

Seems to be required for maximal rate of protein biosynthesis. Enhances ribosome dissociation into subunits and stabilizes the binding of the initiator Met-tRNA(I) to 40 S ribosomal subunits. This Sulfurisphaera tokodaii (strain DSM 16993 / JCM 10545 / NBRC 100140 / 7) (Sulfolobus tokodaii) protein is Translation initiation factor 1A (eIF1A).